The following is a 240-amino-acid chain: MNTDFVYTFPPLIPGILKRRYKRFLADIELESGEMITAHCANTGPMIGVCDAESQVYVSKSNNPKRKLAYSWELIEVDNTWVGINTALPNRVIKQILEQEKLPHLKGKYNKVRSEVPYGKDKKSRIDFVLTNESQQNPIYLEVKNTTLAKDKIALFPDTVTTRGQKHLQELMDLLPDAQPIMLYFINRGDCQQFSPGDDYDPGYGKLFREAVKKGVEILPCRFEITPQGIRYLGLADLKF.

This sequence belongs to the SfsA family.

The sequence is that of Sugar fermentation stimulation protein homolog from Crocosphaera subtropica (strain ATCC 51142 / BH68) (Cyanothece sp. (strain ATCC 51142)).